The following is a 320-amino-acid chain: Elongation factor Ts (320 aa).

Residues 82–85 (TDFV) form an involved in Mg(2+) ion dislocation from EF-Tu region.

This sequence belongs to the EF-Ts family.

The protein localises to the cytoplasm. In terms of biological role, associates with the EF-Tu.GDP complex and induces the exchange of GDP to GTP. It remains bound to the aminoacyl-tRNA.EF-Tu.GTP complex up to the GTP hydrolysis stage on the ribosome. The polypeptide is Elongation factor Ts (Flavobacterium johnsoniae (strain ATCC 17061 / DSM 2064 / JCM 8514 / BCRC 14874 / CCUG 350202 / NBRC 14942 / NCIMB 11054 / UW101) (Cytophaga johnsonae)).